A 397-amino-acid polypeptide reads, in one-letter code: 3-hydroxybenzoate 6-hydroxylase (397 aa).

The protein belongs to the 3-hydroxybenzoate 6-hydroxylase family. Monomer. It depends on FAD as a cofactor.

It catalyses the reaction 3-hydroxybenzoate + NADH + O2 + H(+) = 2,5-dihydroxybenzoate + NAD(+) + H2O. Its activity is regulated as follows. Inhibited by copper, mercury and iron ions. In terms of biological role, catalyzes the NAD- or NADP-dependent conversion of 3-hydroxybenzoate to gentisate. NAD and NADP function equally well. This Klebsiella oxytoca protein is 3-hydroxybenzoate 6-hydroxylase (mhbM).